A 93-amino-acid polypeptide reads, in one-letter code: WAP four-disulfide core domain protein 13 (93 aa).

Residues 1–22 form the signal peptide; that stretch reads MKPVLPLQFLVVFCLALQLVPG. In terms of domain architecture, WAP; atypical spans 24–73; the sequence is PKQRVLKYILEPPPCISAPENCTHLCTMQEDCEKGFQCCSSFCGIVCSSE. 3 disulfide bridges follow: cysteine 45-cysteine 66, cysteine 49-cysteine 61, and cysteine 55-cysteine 70.

It localises to the secreted. Functionally, putative acid-stable proteinase inhibitor. The chain is WAP four-disulfide core domain protein 13 (WFDC13) from Homo sapiens (Human).